Consider the following 401-residue polypeptide: Argininosuccinate synthase (401 aa).

10-18 is a binding site for ATP; that stretch reads AYSGGVDTS. Tyrosine 89 is a binding site for L-citrulline. Glycine 119 contributes to the ATP binding site. Residues threonine 121, asparagine 125, and aspartate 126 each coordinate L-aspartate. Residue asparagine 125 coordinates L-citrulline. 5 residues coordinate L-citrulline: arginine 129, serine 177, serine 186, glutamate 262, and tyrosine 274.

It belongs to the argininosuccinate synthase family. Type 1 subfamily. In terms of assembly, homotetramer.

The protein localises to the cytoplasm. It catalyses the reaction L-citrulline + L-aspartate + ATP = 2-(N(omega)-L-arginino)succinate + AMP + diphosphate + H(+). It participates in amino-acid biosynthesis; L-arginine biosynthesis; L-arginine from L-ornithine and carbamoyl phosphate: step 2/3. The protein is Argininosuccinate synthase of Thermosynechococcus vestitus (strain NIES-2133 / IAM M-273 / BP-1).